The chain runs to 433 residues: 2,2-dialkylglycine decarboxylase (433 aa).

Lysine 272 bears the N6-(pyridoxal phosphate)lysine mark.

It belongs to the class-III pyridoxal-phosphate-dependent aminotransferase family. As to quaternary structure, homotetramer. Requires pyridoxal 5'-phosphate as cofactor.

The catalysed reaction is 2,2-dialkylglycine + pyruvate + H(+) = dialkyl ketone + L-alanine + CO2. In terms of biological role, the dialkylglycine decarboxylase is of interest because it normally catalyzes both decarboxylation and amino transfer. It may be more properly described as a decarboxylating aminotransferase rather than an aminotransferring decarboxylase. The sequence is that of 2,2-dialkylglycine decarboxylase (dgdA) from Burkholderia cepacia (Pseudomonas cepacia).